The chain runs to 807 residues: DNA gyrase subunit B (807 aa).

Positions 429-543 (SELFIVEGDS…KGYLYIAQPP (115 aa)) constitute a Toprim domain. Positions 435, 508, and 510 each coordinate Mg(2+).

The protein belongs to the type II topoisomerase GyrB family. As to quaternary structure, heterotetramer, composed of two GyrA and two GyrB chains. In the heterotetramer, GyrA contains the active site tyrosine that forms a transient covalent intermediate with DNA, while GyrB binds cofactors and catalyzes ATP hydrolysis. The cofactor is Mg(2+). Requires Mn(2+) as cofactor. Ca(2+) serves as cofactor.

The protein resides in the cytoplasm. It catalyses the reaction ATP-dependent breakage, passage and rejoining of double-stranded DNA.. Its function is as follows. A type II topoisomerase that negatively supercoils closed circular double-stranded (ds) DNA in an ATP-dependent manner to modulate DNA topology and maintain chromosomes in an underwound state. Negative supercoiling favors strand separation, and DNA replication, transcription, recombination and repair, all of which involve strand separation. Also able to catalyze the interconversion of other topological isomers of dsDNA rings, including catenanes and knotted rings. Type II topoisomerases break and join 2 DNA strands simultaneously in an ATP-dependent manner. This is DNA gyrase subunit B from Rickettsia typhi (strain ATCC VR-144 / Wilmington).